The sequence spans 92 residues: Small ribosomal subunit protein bS20 (92 aa).

The disordered stretch occupies residues 1–28 (MANTASAEKRNRQAQKRRARNVQVRTGV).

The protein belongs to the bacterial ribosomal protein bS20 family.

Binds directly to 16S ribosomal RNA. This Anaeromyxobacter dehalogenans (strain 2CP-C) protein is Small ribosomal subunit protein bS20.